A 360-amino-acid polypeptide reads, in one-letter code: Inward rectifier potassium channel 13 (360 aa).

At 1-50 (MDSSNCKVNAPLLSQRHRRMVTKDGHSTLQMDGAQRGLVYLRDAWGILMD) the chain is on the cytoplasmic side. Residues 51–77 (MRWRWMMLVFSASFVVHWLVFAVLWYA) form a helical membrane-spanning segment. The Extracellular segment spans residues 78 to 105 (VAEMNGDLEIDHDVPPENHTICVKHITS). An intramembrane region (helical; Pore-forming) is located at residues 106–122 (FTAAFSFSLETQLTIGY). The Selectivity filter signature appears at 119 to 124 (TIGYGT). Topologically, residues 123–131 (GTMFPSGDC) are extracellular. Residues 132 to 157 (PSAIALLAIQMLLGLMLEAFITGAFV) form a helical membrane-spanning segment. Residues 158–360 (AKIARPKNRA…FQIAETGLTE (203 aa)) lie on the Cytoplasmic side of the membrane. S287 is modified (phosphoserine; by PKA).

It belongs to the inward rectifier-type potassium channel (TC 1.A.2.1) family. KCNJ13 subfamily. In terms of assembly, homotetramer. Interacts with RAB28; the interaction may facilitate cone outer segments phagocytosis. Phosphorylation at Ser-287 by PKA increases ionic currents. In terms of tissue distribution, expressed in retina.

Its subcellular location is the membrane. The protein localises to the cell membrane. It catalyses the reaction K(+)(in) = K(+)(out). With respect to regulation, inhibited by Ba(2+) and Cs(+), although sensitivity to those inhibitors is much lower than in other Kir channels. Its function is as follows. Inward rectifier potassium channels are characterized by a greater tendency to allow potassium to flow into the cell rather than out of it. Their voltage dependence is regulated by the concentration of extracellular potassium; as external potassium is raised, the voltage range of the channel opening shifts to more positive voltages. The inward rectification is mainly due to the blockage of outward current by internal magnesium. KCNJ13 has a very low single channel conductance, low sensitivity to block by external barium and cesium, and no dependence of its inward rectification properties on the internal blocking particle magnesium. In Mus musculus (Mouse), this protein is Inward rectifier potassium channel 13.